An 86-amino-acid polypeptide reads, in one-letter code: UPF0457 protein SERP1772 (86 aa).

The protein belongs to the UPF0457 family.

The sequence is that of UPF0457 protein SERP1772 from Staphylococcus epidermidis (strain ATCC 35984 / DSM 28319 / BCRC 17069 / CCUG 31568 / BM 3577 / RP62A).